Here is a 195-residue protein sequence, read N- to C-terminus: ATP-dependent Clp protease proteolytic subunit 2 (195 aa).

Ser92 acts as the Nucleophile in catalysis. His117 is an active-site residue.

Belongs to the peptidase S14 family. Fourteen ClpP subunits assemble into 2 heptameric rings which stack back to back to give a disk-like structure with a central cavity, resembling the structure of eukaryotic proteasomes.

The protein resides in the cytoplasm. It catalyses the reaction Hydrolysis of proteins to small peptides in the presence of ATP and magnesium. alpha-casein is the usual test substrate. In the absence of ATP, only oligopeptides shorter than five residues are hydrolyzed (such as succinyl-Leu-Tyr-|-NHMec, and Leu-Tyr-Leu-|-Tyr-Trp, in which cleavage of the -Tyr-|-Leu- and -Tyr-|-Trp bonds also occurs).. Its function is as follows. Cleaves peptides in various proteins in a process that requires ATP hydrolysis. Has a chymotrypsin-like activity. Plays a major role in the degradation of misfolded proteins. This Rhodococcus jostii (strain RHA1) protein is ATP-dependent Clp protease proteolytic subunit 2.